Here is a 457-residue protein sequence, read N- to C-terminus: UDP-N-acetyl-alpha-D-muramoyl-L-alanyl-L-glutamate epimerase (457 aa).

Belongs to the MurL family.

It catalyses the reaction UDP-N-acetyl-alpha-D-muramoyl-L-alanyl-L-glutamate + ATP + H2O = UDP-N-acetyl-alpha-D-muramoyl-L-alanyl-D-glutamate + AMP + diphosphate + H(+). It participates in cell wall biogenesis; peptidoglycan biosynthesis. Functionally, cell wall formation. Catalyzes epimerization of the terminal L-glutamate in UDP-N-acetyl-alpha-D-muramoyl-L-alanyl-L-glutamate. The polypeptide is UDP-N-acetyl-alpha-D-muramoyl-L-alanyl-L-glutamate epimerase (Salinispora tropica (strain ATCC BAA-916 / DSM 44818 / JCM 13857 / NBRC 105044 / CNB-440)).